A 256-amino-acid chain; its full sequence is Ribosomal RNA small subunit methyltransferase A (256 aa).

His12, Leu14, Gly39, Glu60, Asp81, and Asn103 together coordinate S-adenosyl-L-methionine.

This sequence belongs to the class I-like SAM-binding methyltransferase superfamily. rRNA adenine N(6)-methyltransferase family. RsmA subfamily.

Its subcellular location is the cytoplasm. It catalyses the reaction adenosine(1518)/adenosine(1519) in 16S rRNA + 4 S-adenosyl-L-methionine = N(6)-dimethyladenosine(1518)/N(6)-dimethyladenosine(1519) in 16S rRNA + 4 S-adenosyl-L-homocysteine + 4 H(+). Specifically dimethylates two adjacent adenosines (A1518 and A1519) in the loop of a conserved hairpin near the 3'-end of 16S rRNA in the 30S particle. May play a critical role in biogenesis of 30S subunits. This Methylibium petroleiphilum (strain ATCC BAA-1232 / LMG 22953 / PM1) protein is Ribosomal RNA small subunit methyltransferase A.